The primary structure comprises 179 residues: Large ribosomal subunit protein bL19 (179 aa).

The protein belongs to the bacterial ribosomal protein bL19 family.

Functionally, this protein is located at the 30S-50S ribosomal subunit interface and may play a role in the structure and function of the aminoacyl-tRNA binding site. The chain is Large ribosomal subunit protein bL19 from Rhizobium johnstonii (strain DSM 114642 / LMG 32736 / 3841) (Rhizobium leguminosarum bv. viciae).